Here is a 502-residue protein sequence, read N- to C-terminus: Lysine--tRNA ligase (502 aa).

Residues Glu-409 and Glu-416 each contribute to the Mg(2+) site.

This sequence belongs to the class-II aminoacyl-tRNA synthetase family. As to quaternary structure, homodimer. It depends on Mg(2+) as a cofactor.

The protein localises to the cytoplasm. The catalysed reaction is tRNA(Lys) + L-lysine + ATP = L-lysyl-tRNA(Lys) + AMP + diphosphate. The sequence is that of Lysine--tRNA ligase from Shouchella clausii (strain KSM-K16) (Alkalihalobacillus clausii).